The following is a 137-amino-acid chain: Large ribosomal subunit protein uL16 (137 aa).

Belongs to the universal ribosomal protein uL16 family. Part of the 50S ribosomal subunit.

In terms of biological role, binds 23S rRNA and is also seen to make contacts with the A and possibly P site tRNAs. The polypeptide is Large ribosomal subunit protein uL16 (Nitrobacter winogradskyi (strain ATCC 25391 / DSM 10237 / CIP 104748 / NCIMB 11846 / Nb-255)).